We begin with the raw amino-acid sequence, 290 residues long: 2-hydroxy-6-oxo-6-(2'-aminophenyl)hexa-2,4-dienoic acid hydrolase (290 aa).

Catalysis depends on residues Ser-114, Asp-233, and His-261.

It belongs to the DmpD/TodF/XylF esterase family. As to quaternary structure, homodimer.

The enzyme catalyses (2E,4E)-6-(2-aminophenyl)-2-hydroxy-6-oxohexa-2,4-dienoate + H2O = (2E)-2-hydroxypenta-2,4-dienoate + anthranilate + H(+). It functions in the pathway xenobiotic degradation; carbazole degradation. Involved in the degradation of carbazole, a toxic N-heterocyclic aromatic compound containing dibenzopyrrole system. Catalyzes the hydrolytic cleavage of a carbon-carbon bond of 2-hydroxy-6-oxo-6-(2'-aminophenyl)hexa-2,4-dienoic acid (HOPDA) to yield anthranilate. CarC is specific for 2-hydroxy-6-oxo-6-phenylhexa-2,4-dienoic acid (6-phenyl-HODA), and has little activity toward 2-hydroxy-6-oxohepta-2,4-dienoic acid and 2-hydroxymuconic semialdehyde. The effect of the presence of an amino group or hydroxyl group at the 2'-position of phenyl moiety of 6-phenyl-HODA on the enzyme activity is found to be small. The sequence is that of 2-hydroxy-6-oxo-6-(2'-aminophenyl)hexa-2,4-dienoic acid hydrolase (carC) from Metapseudomonas resinovorans (Pseudomonas resinovorans).